The following is a 271-amino-acid chain: Short-chain dehydrogenase/reductase SAT3 (271 aa).

Residues Ser17, Asp40, and Asn67 each coordinate NADP(+). The Proton donor role is filled by Ser153. NADP(+) contacts are provided by Tyr168, Lys172, and Ser203. Tyr168 functions as the Proton acceptor in the catalytic mechanism. Lys172 serves as the catalytic Lowers pKa of active site Tyr.

Belongs to the short-chain dehydrogenases/reductases (SDR) family.

The protein operates within mycotoxin biosynthesis. Short-chain dehydrogenase/reductase; part of the satratoxin SC1 cluster involved in the biosynthesis of satratoxins, trichothecene mycotoxins that are associated with human food poisonings. Satratoxins are suggested to be made by products of multiple gene clusters (SC1, SC2 and SC3) that encode 21 proteins in all, including polyketide synthases, acetyltransferases, and other enzymes expected to modify the trichothecene skeleton. SC1 encodes 10 proteins, SAT1 to SAT10. The largest are SAT8, which encodes a putative polyketide synthase (PKS) with a conventional non-reducing architecture, and SAT10, a putative protein containing four ankyrin repeats and thus may be involved in protein scaffolding. The putative short-chain reductase SAT3 may assist the PKS in some capacity. SAT6 contains a secretory lipase domain and acts probably as a trichothecene esterase. SAT5 encodes a putative acetyltransferase, and so, with SAT6, may affect endogenous protection from toxicity. The probable transcription factor SAT9 may regulate the expression of the SC1 cluster. SC2 encodes proteins SAT11 to SAT16, the largest of which encodes the putative reducing PKS SAT13. SAT11 is a cytochrome P450 monooxygenase, while SAT14 and SAT16 are probable acetyltransferases. The SC2 cluster may be regulated by the transcription factor SAT15. SC3 is a small cluster that encodes 5 proteins, SAT17 to SAT21. SAT21 is a putative MFS-type transporter which may have a role in exporting secondary metabolites. The four other proteins putatively encoded in SC3 include the taurine hydroxylase-like protein SAT17, the O-methyltransferase SAT18, the acetyltransferase SAT19, and the Cys6-type zinc finger SAT20, the latter being probably involved in regulation of SC3 expression. The protein is Short-chain dehydrogenase/reductase SAT3 of Stachybotrys chartarum (strain CBS 109288 / IBT 7711) (Toxic black mold).